The chain runs to 369 residues: Ribosomal RNA large subunit methyltransferase G (369 aa).

Belongs to the methyltransferase superfamily. RlmG family.

It is found in the cytoplasm. The catalysed reaction is guanosine(1835) in 23S rRNA + S-adenosyl-L-methionine = N(2)-methylguanosine(1835) in 23S rRNA + S-adenosyl-L-homocysteine + H(+). In terms of biological role, specifically methylates the guanine in position 1835 (m2G1835) of 23S rRNA. The chain is Ribosomal RNA large subunit methyltransferase G from Magnetococcus marinus (strain ATCC BAA-1437 / JCM 17883 / MC-1).